Reading from the N-terminus, the 1230-residue chain is Protein transport protein Sec31A (1230 aa).

WD repeat units lie at residues 4 to 47, 64 to 111, 120 to 160, 166 to 206, 209 to 254, 258 to 298, and 301 to 342; these read KEID…EIFE, SSSH…AGDK, KHTG…TPMT, QPPE…PIIK, DHSN…SPLR, NHAR…VLYE, and TNTQ…DGLR. The interval 161 to 470 is interaction with SEC13; it reads PGAKTQPPED…IEASQTEFEK (310 aa). The WD 8; interaction with SEC13 repeat unit spans residues 397–429; that stretch reads SFSFGGKLVTFESVAVPLQQGAEQQRRQPVFIS. The residue at position 423 (R423) is an Asymmetric dimethylarginine. Residues S526 and S531 each carry the phosphoserine modification. Residue K646 forms a Glycyl lysine isopeptide (Lys-Gly) (interchain with G-Cter in ubiquitin) linkage. Disordered regions lie at residues 789–905 and 924–1104; these read QGKP…ASNA and MYTA…PIGN. S798 is subject to Phosphoserine. The interval 799-1123 is interaction with PDCD6; that stretch reads SQSPYERQPL…TEKITKKPIP (325 aa). Residues 841-847 carry the ALG-2-binding site motif-2 (ABS-2) motif; the sequence is GFIMQGN. A compositionally biased stretch (pro residues) spans 866-876; the sequence is QLPPYPQPQPY. 2 stretches are compositionally biased toward low complexity: residues 930–940 and 959–975; these read ASSPTSSSAAS and PSSS…GTPP. 2 stretches are compositionally biased toward polar residues: residues 981–995 and 1033–1064; these read PASQ…QDQA and PIMN…SFPQ. At T1171 the chain carries Phosphothreonine. S1173 bears the Phosphoserine mark. K1227 is covalently cross-linked (Glycyl lysine isopeptide (Lys-Gly) (interchain with G-Cter in ubiquitin)).

Belongs to the WD repeat SEC31 family. COPII is composed of at least 5 proteins: the SEC23/24 complex, the SEC13/31 complex and SAR1. SEC13 and SEC31 make a 2:2 tetramer that forms the edge element of the COPII outer coat. The tetramer self-assembles in multiple copies to form the complete polyhedral cage. Interacts (via WD 8) with SEC13. Interacts with PDCD6; interaction takes place in response to cytosolic calcium increase and leads to bridge together the BCR(KLHL12) complex and SEC31A, leading to monoubiquitination. Interacts with KLHL12. In terms of processing, monoubiquitinated by the BCR(KLHL12) E3 ubiquitin ligase complex, leading to regulate the size of COPII coats.

Its subcellular location is the cytoplasm. It is found in the cytoplasmic vesicle. The protein resides in the COPII-coated vesicle membrane. The protein localises to the endoplasmic reticulum membrane. Component of the coat protein complex II (COPII) which promotes the formation of transport vesicles from the endoplasmic reticulum (ER). The coat has two main functions, the physical deformation of the endoplasmic reticulum membrane into vesicles and the selection of cargo molecules. The protein is Protein transport protein Sec31A (Sec31a) of Mus musculus (Mouse).